We begin with the raw amino-acid sequence, 190 residues long: Dynactin subunit 6 (190 aa).

Position 186 is a phosphothreonine; by CDK1 (Thr-186).

This sequence belongs to the dynactin subunits 5/6 family. Dynactin subunit 6 subfamily. In terms of assembly, subunit of dynactin, a multiprotein complex part of a tripartite complex with dynein and a adapter, such as BICDL1, BICD2 or HOOK3. The dynactin complex is built around ACTR1A/ACTB filament and consists of an actin-related filament composed of a shoulder domain, a pointed end and a barbed end. Its length is defined by its flexible shoulder domain. The soulder is composed of 2 DCTN1 subunits, 4 DCTN2 and 2 DCTN3. The 4 DCNT2 (via N-terminus) bind the ACTR1A filament and act as molecular rulers to determine the length. The pointed end is important for binding dynein-dynactin cargo adapters. Consists of 4 subunits: ACTR10, DCNT4, DCTN5 and DCTN6. Within the complex DCTN6 forms a heterodimer with DCTN5. The barbed end is composed of a CAPZA1:CAPZB heterodimers, which binds ACTR1A/ACTB filament and dynactin and stabilizes dynactin. Interacts with PLK1. Interacts with N4BP2L1. Post-translationally, phosphorylation at Thr-186 by CDK1 during mitotic prometaphase creates a binding site for PLK1 that facilitates its recruitment to kinetochores.

The protein resides in the cytoplasm. It localises to the cytoskeleton. The protein localises to the chromosome. It is found in the centromere. Its subcellular location is the kinetochore. In terms of biological role, part of the dynactin complex that activates the molecular motor dynein for ultra-processive transport along microtubules. In Bos taurus (Bovine), this protein is Dynactin subunit 6 (DCTN6).